The chain runs to 424 residues: Serine--tRNA ligase (424 aa).

L-serine is bound at residue 233–235 (TAE). Residue 264–266 (RRE) participates in ATP binding. Residue glutamate 287 participates in L-serine binding. 351–354 (EISS) serves as a coordination point for ATP. Serine 387 contacts L-serine.

The protein belongs to the class-II aminoacyl-tRNA synthetase family. Type-1 seryl-tRNA synthetase subfamily. Homodimer. The tRNA molecule binds across the dimer.

The protein resides in the cytoplasm. The catalysed reaction is tRNA(Ser) + L-serine + ATP = L-seryl-tRNA(Ser) + AMP + diphosphate + H(+). It carries out the reaction tRNA(Sec) + L-serine + ATP = L-seryl-tRNA(Sec) + AMP + diphosphate + H(+). The protein operates within aminoacyl-tRNA biosynthesis; selenocysteinyl-tRNA(Sec) biosynthesis; L-seryl-tRNA(Sec) from L-serine and tRNA(Sec): step 1/1. Functionally, catalyzes the attachment of serine to tRNA(Ser). Is also able to aminoacylate tRNA(Sec) with serine, to form the misacylated tRNA L-seryl-tRNA(Sec), which will be further converted into selenocysteinyl-tRNA(Sec). The polypeptide is Serine--tRNA ligase (Cyanothece sp. (strain PCC 7425 / ATCC 29141)).